The following is a 470-amino-acid chain: Desmin (470 aa).

A head region spans residues 2–108; sequence SQAYSSSQRV…QEFLTTRTNE (107 aa). Ser-7 is modified (phosphoserine; by CDK1). Position 12 is a phosphoserine; by AURKB (Ser-12). Arg-16 is modified (omega-N-methylarginine). Thr-17 bears the Phosphothreonine; by AURKB and ROCK1 mark. Residue Ser-28 is modified to Phosphoserine; by CDK1. A Phosphoserine modification is found at Ser-31. Ser-32 is modified (phosphoserine; by CDK1). Arg-37 is subject to Asymmetric dimethylarginine; alternate. Residue Arg-37 is modified to Omega-N-methylarginine; alternate. Ser-45 is subject to Phosphoserine. Arg-58 is subject to ADP-ribosylarginine. Residue Ser-60 is modified to Phosphoserine; by AURKB. Position 70 is an omega-N-methylarginine (Arg-70). Phosphothreonine; by ROCK1 is present on Thr-77. Ser-81 carries the post-translational modification Phosphoserine. Residues 108-416 form the IF rod domain; the sequence is EKVELQELND…KLLEGEESRI (309 aa). A coil 1A region spans residues 109-141; sequence KVELQELNDRFANYIEKVRFLEQQNAALAAEVN. Residues 142-151 are linker 1; the sequence is RLKGREPTRV. Residues 152 to 252 are coil 1B; the sequence is AEIYEEELRE…HEEEIRELQA (101 aa). The tract at residues 253 to 268 is linker 12; it reads QLQEQQVQVEMDMSKP. Residues 268–415 are interaction with NEB; it reads PDLTAALRDI…RKLLEGEESR (148 aa). The coil 2A stretch occupies residues 269 to 287; the sequence is DLTAALRDIRAQYETIAAK. Residues 288–295 form a linker 2 region; it reads NISEAEEW. Phosphoserine is present on residues Ser-290, Ser-358, Ser-361, and Ser-424. The tract at residues 296-412 is coil 2B; the sequence is YKSKVSDLTQ…ATYRKLLEGE (117 aa). The tract at residues 413–470 is tail; the sequence is ESRINLPIQTFSALNFRETSPEQRGSEVHTKKTVMIKTIETRDGEVVSEATQQQHEVL. The interaction with CRYAB stretch occupies residues 438-453; that stretch reads SEVHTKKTVMIKTIET.

It belongs to the intermediate filament family. As to quaternary structure, homomer. Interacts with DST. Interacts with MTM1. Interacts with EPPK1; interaction is dependent of higher-order structure of intermediate filament. Interacts with CRYAB. Interacts with NEB (via nebulin repeats 160-164). Interacts (via rod region) with NEBL (via nebulin repeats 1-5). Interacts with ASB2; the interaction targets DES for proteasomal degradation. Interacts with PKP1. Interacts with FLII. In terms of processing, ADP-ribosylation prevents ability to form intermediate filaments. Post-translationally, phosphorylation at Ser-7, Ser-28 and Ser-32 by CDK1 and phosphorylation at Ser-60 by AURKB contribute to efficient separation of desmin intermediate filaments during mitosis. Ubiquitination by a SCF-like complex containing ASB2 leads to proteasomal degradation.

It is found in the cytoplasm. The protein resides in the myofibril. The protein localises to the sarcomere. Its subcellular location is the z line. It localises to the cell membrane. It is found in the sarcolemma. The protein resides in the nucleus. The protein localises to the cell tip. Its subcellular location is the nucleus envelope. Muscle-specific type III intermediate filament essential for proper muscular structure and function. Plays a crucial role in maintaining the structure of sarcomeres, inter-connecting the Z-disks and forming the myofibrils, linking them not only to the sarcolemmal cytoskeleton, but also to the nucleus and mitochondria, thus providing strength for the muscle fiber during activity. In adult striated muscle they form a fibrous network connecting myofibrils to each other and to the plasma membrane from the periphery of the Z-line structures. May act as a sarcomeric microtubule-anchoring protein: specifically associates with detyrosinated tubulin-alpha chains, leading to buckled microtubules and mechanical resistance to contraction. Required for nuclear membrane integrity, via anchoring at the cell tip and nuclear envelope, resulting in maintenance of microtubule-derived intracellular mechanical forces. Contributes to the transcriptional regulation of the NKX2-5 gene in cardiac progenitor cells during a short period of cardiomyogenesis and in cardiac side population stem cells in the adult. Plays a role in maintaining an optimal conformation of nebulette (NEB) on heart muscle sarcomeres to bind and recruit cardiac alpha-actin. In Bos taurus (Bovine), this protein is Desmin (DES).